Reading from the N-terminus, the 254-residue chain is MNHIHEHLKLVPVDKIDLHETFEPLRLEKTKSSIEADDFIRHPILVTAMQHGRYMVIDGVHRYTSLKALGCKKVPVQEIHETQYSISTWQHKVPFGVWWETLQQEHRLPWTTETRQEAPFITMCHGDTEQYLYTKDLGEAHFQVWEKVVASYSGCCSVERIAQGTYPCLSQQDVLMKYQPLSYKEIEAVVHKGETVPAGVTRFNISGRCLNLQVPLALLKQDDDVEQLRNWKQFLADKFANMRCYTEKVYLVEQ.

E20 is a catalytic residue. S33 provides a ligand contact to ADP. I57 contacts O-phospho-L-serine. Positions 58, 59, 61, and 62 each coordinate ADP. O-phospho-L-serine contacts are provided by G59 and H61. W98 and R229 together coordinate O-phospho-L-serine.

As to quaternary structure, forms dimers and tetramers in solution. Predominantly forms dimers. Dimerization/oligomerization is not essential for kinase activity.

The enzyme catalyses L-serine + ATP = O-phospho-L-serine + ADP + H(+). The protein operates within siderophore biosynthesis. Its activity is regulated as follows. Binds heme and heme binding inhibits DNA binding. Free serine kinase that uses ATP to phosphorylate L-serine to yield O-phospho-L-serine and ADP. O-phospho-L-serine serves as a substrate for SbnA and is a precursor for staphyloferrin B biosynthesis. Is also a DNA-binding regulatory protein that senses heme to control gene expression for siderophore biosynthesis. Binds to DNA within the sbnC coding region and is required for expression of genes in the sbn operon from sbnD onward. This Staphylococcus aureus (strain NCTC 8325 / PS 47) protein is ATP-dependent L-serine kinase SbnI.